A 158-amino-acid chain; its full sequence is UPF0262 protein RSKD131_1985 (158 aa).

This sequence belongs to the UPF0262 family.

The chain is UPF0262 protein RSKD131_1985 from Cereibacter sphaeroides (strain KD131 / KCTC 12085) (Rhodobacter sphaeroides).